Reading from the N-terminus, the 266-residue chain is 2-dehydro-3-deoxy-D-gluconate/2-dehydro-3-deoxy-phosphogluconate aldolase (266 aa).

Substrate contacts are provided by residues 36-37 (ST), 123-125 (YNI), and 151-153 (KDS). Lysine 151 acts as the Schiff-base intermediate with substrate in catalysis.

The protein belongs to the DapA family. KDPG aldolase subfamily. In terms of assembly, homotetramer; dimer of dimers.

The enzyme catalyses 2-dehydro-3-deoxy-6-phospho-D-gluconate = D-glyceraldehyde 3-phosphate + pyruvate. It carries out the reaction 2-dehydro-3-deoxy-D-gluconate = D-glyceraldehyde + pyruvate. It catalyses the reaction 2-dehydro-3-deoxy-6-phospho-D-galactonate = D-glyceraldehyde 3-phosphate + pyruvate. The catalysed reaction is 2-dehydro-3-deoxy-D-galactonate = D-glyceraldehyde + pyruvate. It functions in the pathway carbohydrate acid metabolism; 2-dehydro-3-deoxy-D-gluconate degradation; D-glyceraldehyde 3-phosphate and pyruvate from 2-dehydro-3-deoxy-D-gluconate: step 2/2. Functionally, involved in the degradation of glucose via the Entner-Doudoroff pathway. Catalyzes the reversible cleavage of 2-keto-3-deoxy-6-phosphogluconate (KDPG) and 2-keto-3-deoxygluconate (KDG) forming pyruvate and glyceraldehyde 3-phosphate or glyceraldehyde, respectively. It is also able to catalyze the reversible cleavage of 2-keto-3-deoxy-6-phosphogalactonate (KDPGal) and 2-keto-3-deoxygalactonate (KDGal). It is equally active with both D- and L-glyceraldehyde. This chain is 2-dehydro-3-deoxy-D-gluconate/2-dehydro-3-deoxy-phosphogluconate aldolase, found in Picrophilus torridus (strain ATCC 700027 / DSM 9790 / JCM 10055 / NBRC 100828 / KAW 2/3).